The following is an 858-amino-acid chain: DNA mismatch repair protein MutS (858 aa).

An ATP-binding site is contributed by 637-644; that stretch reads GPNMAGKS.

It belongs to the DNA mismatch repair MutS family.

Its function is as follows. This protein is involved in the repair of mismatches in DNA. It is possible that it carries out the mismatch recognition step. This protein has a weak ATPase activity. This chain is DNA mismatch repair protein MutS, found in Protochlamydia amoebophila (strain UWE25).